The following is a 115-amino-acid chain: T cell receptor delta variable 1 (115 aa).

The signal sequence occupies residues 1–21; the sequence is MLFSSLLCVFVAFSYSGSSVA. Residues 22–115 form the Ig-like domain; that stretch reads QKVTQAQSSV…SAKYFCALGE (94 aa). Cysteines 43 and 111 form a disulfide.

As to quaternary structure, gamma-delta TR is a heterodimer composed of a gamma and delta chain; disulfide-linked. The gamma-delta TR is associated with the transmembrane signaling CD3 coreceptor proteins following the stoichiometry: a single gamma-delta TR heterodimer associates with one CD3D-CD3E heterodimer, one CD3G-CD3E heterodimer and one CD247 homodimer forming a stable octameric structure. Upon activation, gamma-delta TR complex associates with FCER1G to initiate intracellular signaling.

It localises to the cell membrane. Its function is as follows. V region of the variable domain of T cell receptor (TR) delta chain that participates in the antigen recognition. Gamma-delta TRs recognize a variety of self and foreign non-peptide antigens frequently expressed at the epithelial boundaries between the host and external environment, including endogenous lipids presented by MH-like protein CD1D and phosphoantigens presented by butyrophilin-like molecule BTN3A1. Upon antigen recognition induces rapid, innate-like immune responses involved in pathogen clearance and tissue repair. Binding of gamma-delta TR complex to antigen triggers phosphorylation of immunoreceptor tyrosine-based activation motifs (ITAMs) in the CD3 chains by the LCK and FYN kinases, allowing the recruitment, phosphorylation, and activation of ZAP70 that facilitates phosphorylation of the scaffolding proteins LCP2 and LAT. This lead to the formation of a supramolecular signalosome that recruits the phospholipase PLCG1, resulting in calcium mobilization and ERK activation, ultimately leading to T cell expansion and differentiation into effector cells. Gamma-delta TRs are produced through somatic rearrangement of a limited repertoire of variable (V), diversity (D), and joining (J) genes. The potential diversity of gamma-delta TRs is conferred by the unique ability to rearrange (D) genes in tandem and to utilize all three reading frames. The combinatorial diversity is considerably increased by the sequence exonuclease trimming and random nucleotide (N) region additions which occur during the V-(D)-J rearrangements. The sequence is that of T cell receptor delta variable 1 from Homo sapiens (Human).